A 197-amino-acid polypeptide reads, in one-letter code: Xanthine phosphoribosyltransferase (197 aa).

Xanthine is bound by residues L20 and N27. Residue 128 to 132 participates in 5-phospho-alpha-D-ribose 1-diphosphate binding; sequence ANGQA. Position 156 (K156) interacts with xanthine.

The protein belongs to the purine/pyrimidine phosphoribosyltransferase family. Xpt subfamily. In terms of assembly, homodimer.

It is found in the cytoplasm. The catalysed reaction is XMP + diphosphate = xanthine + 5-phospho-alpha-D-ribose 1-diphosphate. The protein operates within purine metabolism; XMP biosynthesis via salvage pathway; XMP from xanthine: step 1/1. Its function is as follows. Converts the preformed base xanthine, a product of nucleic acid breakdown, to xanthosine 5'-monophosphate (XMP), so it can be reused for RNA or DNA synthesis. The sequence is that of Xanthine phosphoribosyltransferase from Bacillus cereus (strain ATCC 10987 / NRS 248).